We begin with the raw amino-acid sequence, 261 residues long: tRNA pseudouridine synthase A 2 (261 aa).

Residue D59 is the Nucleophile of the active site. Y117 is a binding site for substrate.

It belongs to the tRNA pseudouridine synthase TruA family. As to quaternary structure, homodimer.

It carries out the reaction uridine(38/39/40) in tRNA = pseudouridine(38/39/40) in tRNA. Functionally, formation of pseudouridine at positions 38, 39 and 40 in the anticodon stem and loop of transfer RNAs. In Desulfotalea psychrophila (strain LSv54 / DSM 12343), this protein is tRNA pseudouridine synthase A 2.